Reading from the N-terminus, the 721-residue chain is Procollagen-lysine,2-oxoglutarate 5-dioxygenase (721 aa).

Positions 1–21 (MRIQQSALLLLLLAVTSQGDA) are cleaved as a signal peptide. N-linked (GlcNAc...) asparagine glycans are attached at residues N504, N530, and N536. The 95-residue stretch at 627-721 (NPPRALMNFM…RYIMISFIDP (95 aa)) folds into the Fe2OG dioxygenase domain. Residues H650 and D652 each contribute to the Fe cation site. N-linked (GlcNAc...) asparagine glycosylation is present at N680. H702 provides a ligand contact to Fe cation. N-linked (GlcNAc...) asparagine glycosylation is present at N709. 2-oxoglutarate is bound at residue R712.

L-ascorbate serves as cofactor. Fe(2+) is required as a cofactor.

It localises to the endoplasmic reticulum. The protein resides in the secreted. Its subcellular location is the extracellular space. The catalysed reaction is L-lysyl-[collagen] + 2-oxoglutarate + O2 = (5R)-5-hydroxy-L-lysyl-[collagen] + succinate + CO2. Functionally, forms hydroxylysine residues in collagen type IV. Required for the secretion of collagen type IV (vkg) from haemocytes, fat body and follicle cells. The protein is Procollagen-lysine,2-oxoglutarate 5-dioxygenase of Drosophila melanogaster (Fruit fly).